Reading from the N-terminus, the 65-residue chain is Large ribosomal subunit protein bL35 (65 aa).

The tract at residues 1 to 26 is disordered; that stretch reads MPKIKTVRGAAKRFKKTASGGFKRKQ. A compositionally biased stretch (basic residues) spans 10–26; the sequence is AAKRFKKTASGGFKRKQ.

It belongs to the bacterial ribosomal protein bL35 family.

The protein is Large ribosomal subunit protein bL35 of Haemophilus ducreyi (strain 35000HP / ATCC 700724).